Here is a 223-residue protein sequence, read N- to C-terminus: MASKLLRAVILGPPGSGKGTVCQRIAQNFGLQHLSSGHFLRENIKASTEVGEMAKQYIEKSLLVPDHVITRLMMSELENRRGQHWLLDGFPRTLGQAEALDKICEVDLVISLNIPFETLKDRLSRRWIHPPSGRVYNLDFNPPHVHGIDDVTGEPLVQQEDDKPEAVAARLRQYKDVAKPVIELYKSRGVLHQFSGTETNKIWPYVYTLFSNKITPIQSKEAY.

Residue G15 to T20 coordinates a ribonucleoside 5'-triphosphate. Residues S35–V64 are NMP. AMP-binding residues include S36 and R41. The residue at position 60 (K60) is an N6-succinyllysine. Residues L62–V64, G89–R92, and Q96 contribute to the AMP site. An LID region spans residues R125–D162. Residues R126 and V135–Y136 contribute to the a ribonucleoside 5'-triphosphate site. An AMP-binding site is contributed by R170. K175 bears the N6-acetyllysine mark. An N6-acetyllysine; alternate mark is found at K179 and K186. K179 and K186 each carry N6-succinyllysine; alternate. Residue T199 participates in a ribonucleoside 5'-triphosphate binding.

The protein belongs to the adenylate kinase family. AK3 subfamily. In terms of assembly, monomer. Interacts with SLC25A5/ANT2. Highly expressed in kidney, moderately expressed in heart and liver and weakly expressed in brain.

The protein resides in the mitochondrion matrix. The enzyme catalyses a ribonucleoside 5'-phosphate + ATP = a ribonucleoside 5'-diphosphate + ADP. It catalyses the reaction AMP + ATP = 2 ADP. It carries out the reaction GTP + AMP = GDP + ADP. The catalysed reaction is CMP + ATP = CDP + ADP. The enzyme catalyses GTP + CMP = CDP + GDP. It catalyses the reaction dAMP + ATP = dADP + ADP. It carries out the reaction dCMP + ATP = dCDP + ADP. The catalysed reaction is a 2'-deoxyribonucleoside 5'-diphosphate + ATP = a 2'-deoxyribonucleoside 5'-triphosphate + ADP. The enzyme catalyses a ribonucleoside 5'-diphosphate + ATP = a ribonucleoside 5'-triphosphate + ADP. It catalyses the reaction GDP + ATP = GTP + ADP. It carries out the reaction CDP + GTP = CTP + GDP. The catalysed reaction is CDP + ATP = CTP + ADP. The enzyme catalyses UDP + ATP = UTP + ADP. It catalyses the reaction GTP + UDP = UTP + GDP. It carries out the reaction dADP + GTP = dATP + GDP. The catalysed reaction is dCDP + GTP = dCTP + GDP. The enzyme catalyses dCDP + ATP = dCTP + ADP. It catalyses the reaction dGDP + ATP = dGTP + ADP. It carries out the reaction dTDP + GTP = dTTP + GDP. The catalysed reaction is dTDP + ATP = dTTP + ADP. Its function is as follows. Broad-specificity mitochondrial nucleoside phosphate kinase involved in cellular nucleotide homeostasis by catalyzing nucleoside-phosphate interconversions. Similar to other adenylate kinases, preferentially catalyzes the phosphorylation of the nucleoside monophosphate AMP with ATP as phosphate donor to produce ADP. Phosphorylates only AMP when using GTP as phosphate donor. In vitro, can also catalyze the phosphorylation of CMP, dAMP and dCMP and use GTP as an alternate phosphate donor. Moreover, exhibits a diphosphate kinase activity, producing ATP, CTP, GTP, UTP, TTP, dATP, dCTP and dGTP from the corresponding diphosphate substrates with either ATP or GTP as phosphate donors. Plays a role in controlling cellular ATP levels by regulating phosphorylation and activation of the energy sensor protein kinase AMPK. Plays a protective role in the cellular response to oxidative stress. This chain is Adenylate kinase 4, mitochondrial, found in Homo sapiens (Human).